A 282-amino-acid chain; its full sequence is Energy-coupling factor transporter ATP-binding protein EcfA1 (282 aa).

The region spanning 9 to 243 (IEIDNLSFKY…NDELLNIGLD (235 aa)) is the ABC transporter domain. 43 to 50 (GHNGSGKS) contributes to the ATP binding site.

This sequence belongs to the ABC transporter superfamily. Energy-coupling factor EcfA family. In terms of assembly, forms a stable energy-coupling factor (ECF) transporter complex composed of 2 membrane-embedded substrate-binding proteins (S component), 2 ATP-binding proteins (A component) and 2 transmembrane proteins (T component).

It localises to the cell membrane. Its function is as follows. ATP-binding (A) component of a common energy-coupling factor (ECF) ABC-transporter complex. Unlike classic ABC transporters this ECF transporter provides the energy necessary to transport a number of different substrates. The polypeptide is Energy-coupling factor transporter ATP-binding protein EcfA1 (Ligilactobacillus salivarius (strain UCC118) (Lactobacillus salivarius)).